The following is a 182-amino-acid chain: Dephospho-CoA kinase (182 aa).

Residues 4 to 182 (VVAITGGIGS…IINNDHKIMT (179 aa)) enclose the DPCK domain. Residue 12-17 (GSGKTT) participates in ATP binding.

Belongs to the CoaE family.

It is found in the cytoplasm. The enzyme catalyses 3'-dephospho-CoA + ATP = ADP + CoA + H(+). It functions in the pathway cofactor biosynthesis; coenzyme A biosynthesis; CoA from (R)-pantothenate: step 5/5. In terms of biological role, catalyzes the phosphorylation of the 3'-hydroxyl group of dephosphocoenzyme A to form coenzyme A. The chain is Dephospho-CoA kinase from Aliivibrio fischeri (strain ATCC 700601 / ES114) (Vibrio fischeri).